The following is a 227-amino-acid chain: DnaJ homolog subfamily B member 8 (227 aa).

Residues 3-69 (NYYEVLGVQS…KKRSVYDRAG (67 aa)) enclose the J domain.

In terms of assembly, interacts with histone deacetylases HDAC4, HDAC6, and SIRT2, HDAC activity is required for antiaggregation.

Its function is as follows. Efficient suppressor of aggregation and toxicity of disease-associated polyglutamine proteins. The polypeptide is DnaJ homolog subfamily B member 8 (Dnajb8) (Mus musculus (Mouse)).